A 364-amino-acid polypeptide reads, in one-letter code: S-adenosylmethionine:tRNA ribosyltransferase-isomerase (364 aa).

It belongs to the QueA family. As to quaternary structure, monomer.

It is found in the cytoplasm. The enzyme catalyses 7-aminomethyl-7-carbaguanosine(34) in tRNA + S-adenosyl-L-methionine = epoxyqueuosine(34) in tRNA + adenine + L-methionine + 2 H(+). It functions in the pathway tRNA modification; tRNA-queuosine biosynthesis. Transfers and isomerizes the ribose moiety from AdoMet to the 7-aminomethyl group of 7-deazaguanine (preQ1-tRNA) to give epoxyqueuosine (oQ-tRNA). The polypeptide is S-adenosylmethionine:tRNA ribosyltransferase-isomerase (Bradyrhizobium sp. (strain BTAi1 / ATCC BAA-1182)).